The sequence spans 505 residues: Apolipoprotein N-acyltransferase (505 aa).

Transmembrane regions (helical) follow at residues 15–46 (AAFV…LLLL), 55–75 (ALIA…WVHV), 89–109 (LFLM…FGWL), 129–149 (LWLI…WLWL), 161–181 (FAPI…AGSL), and 192–212 (MACI…MQWV). Residues 225-471 (IQGNIEQGLK…TGVLKATVTP (247 aa)) form the CN hydrolase domain. The active-site Proton acceptor is glutamate 264. Residue lysine 330 is part of the active site. Catalysis depends on cysteine 382, which acts as the Nucleophile. The helical transmembrane segment at 479 to 499 (FLWGTTPLYLWVGLAAGFAFW) threads the bilayer.

It belongs to the CN hydrolase family. Apolipoprotein N-acyltransferase subfamily.

It localises to the cell inner membrane. It carries out the reaction N-terminal S-1,2-diacyl-sn-glyceryl-L-cysteinyl-[lipoprotein] + a glycerophospholipid = N-acyl-S-1,2-diacyl-sn-glyceryl-L-cysteinyl-[lipoprotein] + a 2-acyl-sn-glycero-3-phospholipid + H(+). The protein operates within protein modification; lipoprotein biosynthesis (N-acyl transfer). In terms of biological role, catalyzes the phospholipid dependent N-acylation of the N-terminal cysteine of apolipoprotein, the last step in lipoprotein maturation. The protein is Apolipoprotein N-acyltransferase of Vibrio cholerae serotype O1 (strain ATCC 39315 / El Tor Inaba N16961).